A 173-amino-acid chain; its full sequence is Crossover junction endodeoxyribonuclease RuvC (173 aa).

Residues D8, E67, and D139 contribute to the active site. Residues D8, E67, and D139 each coordinate Mg(2+).

The protein belongs to the RuvC family. As to quaternary structure, homodimer which binds Holliday junction (HJ) DNA. The HJ becomes 2-fold symmetrical on binding to RuvC with unstacked arms; it has a different conformation from HJ DNA in complex with RuvA. In the full resolvosome a probable DNA-RuvA(4)-RuvB(12)-RuvC(2) complex forms which resolves the HJ. Requires Mg(2+) as cofactor.

It localises to the cytoplasm. It catalyses the reaction Endonucleolytic cleavage at a junction such as a reciprocal single-stranded crossover between two homologous DNA duplexes (Holliday junction).. Functionally, the RuvA-RuvB-RuvC complex processes Holliday junction (HJ) DNA during genetic recombination and DNA repair. Endonuclease that resolves HJ intermediates. Cleaves cruciform DNA by making single-stranded nicks across the HJ at symmetrical positions within the homologous arms, yielding a 5'-phosphate and a 3'-hydroxyl group; requires a central core of homology in the junction. The consensus cleavage sequence is 5'-(A/T)TT(C/G)-3'. Cleavage occurs on the 3'-side of the TT dinucleotide at the point of strand exchange. HJ branch migration catalyzed by RuvA-RuvB allows RuvC to scan DNA until it finds its consensus sequence, where it cleaves and resolves the cruciform DNA. The chain is Crossover junction endodeoxyribonuclease RuvC from Salmonella dublin (strain CT_02021853).